A 580-amino-acid chain; its full sequence is MGSSRLRVFDPHLERKDSAAALSDRELPLPTFDVPYFKYIDEEDEDDEWSSRSQSSTEDDSVDSLLSDRYVVVSGTPEKILEHLLNDLHLEEVQDKETETLLDDFLLTYTVFMTTDDLCQALLRHYSAKKYQGKEENSDVPRRKRKVLHLVSQWIALYKDWLPEDEHSKMFLKTIYRNVLDDVYEYPILEKELKEFQKILGMHRRHTVDEYSPQKKNKALFHQFSLKENWLQHRGTVTETEEIFCHVYITEHSYVSVKAKVSSIAQEILKVVAEKIQYAEEDLALVAITFSGEKHELQPNDLVISKSLEASGRIYVYRKDLADTLNPFAENEESQQRSMRILGMNTWDLALELMNFDWSLFNSIHEQELIYFTFSRQGSGEHTANLSLLLQRCNEVQLWVATEILLCSQLGKRVQLVKKFIKIAAHCKAQRNLNSFFAIVMGLNTASVSRLSQTWEKIPGKFKKLFSELESLTDPSLNHKAYRDAFKKMKPPKIPFMPLLLKDVTFIHEGNKTFLDNLVNFEKLHMIADTVRTLRHCRTNQFGDLSPKEHQELKSYVNHLYVIDSQQALFELSHRIEPRV.

The N-terminal Ras-GEF domain occupies 68 to 201 (DRYVVVSGTP…ELKEFQKILG (134 aa)). One can recognise a Ras-GEF domain in the interval 345 to 579 (NTWDLALELM…FELSHRIEPR (235 aa)).

As to expression, widely expressed with highest levels in brain.

Its subcellular location is the nucleus. Its function is as follows. Guanine nucleotide exchange factor (GEF) for RAP1A, RAP2A and MRAS/M-Ras-GTP. Its association with MRAS inhibits Rap1 activation. This chain is Rap guanine nucleotide exchange factor 5 (RAPGEF5), found in Homo sapiens (Human).